We begin with the raw amino-acid sequence, 1394 residues long: DNA-directed RNA polymerase subunit beta' (1394 aa).

The Zn(2+) site is built by C71, C73, C86, and C89. Mg(2+) is bound by residues D462, D464, and D466. Residues C811, C885, C892, and C895 each coordinate Zn(2+).

Belongs to the RNA polymerase beta' chain family. As to quaternary structure, the RNAP catalytic core consists of 2 alpha, 1 beta, 1 beta' and 1 omega subunit. When a sigma factor is associated with the core the holoenzyme is formed, which can initiate transcription. Mg(2+) serves as cofactor. It depends on Zn(2+) as a cofactor.

The enzyme catalyses RNA(n) + a ribonucleoside 5'-triphosphate = RNA(n+1) + diphosphate. Its function is as follows. DNA-dependent RNA polymerase catalyzes the transcription of DNA into RNA using the four ribonucleoside triphosphates as substrates. In Xanthobacter autotrophicus (strain ATCC BAA-1158 / Py2), this protein is DNA-directed RNA polymerase subunit beta'.